Consider the following 545-residue polypeptide: Reticulon-2 (545 aa).

Disordered regions lie at residues 1-183 (MGQV…ETGE) and 199-250 (SPEV…EREP). The span at 14-25 (APSTASSTPDST) shows a compositional bias: low complexity. Residues 32–43 (SDFRELHTAREF) are compositionally biased toward basic and acidic residues. S44 carries the post-translational modification Phosphoserine. The span at 135 to 146 (RPLEDLRLRLDH) shows a compositional bias: basic and acidic residues. A compositionally biased stretch (low complexity) spans 157-166 (GEDSSTSSST). A compositionally biased stretch (polar residues) spans 199 to 230 (SPEVLTPQLSPGSGTPQAGTPSPSRSRDSNSG). Residues S227 and S229 each carry the phosphoserine modification. The 201-residue stretch at 345-545 (VADLLYWKDT…AVSGSKAKAE (201 aa)) folds into the Reticulon domain. 2 helical membrane-spanning segments follow: residues 368 to 388 (LLCLLHFSIVSVAAHLALLLL) and 463 to 483 (LLFYILTFVGAIFNGLTLLIL).

In terms of assembly, interacts with isoform 1 but not isoform 3 of SPAST. Interacts with BACE1. Interacts (via first transmembrane domain) with ARL6IP5/GTRAP3-18. Interacts (via N-terminus) with SLC1A1/EAAC1; the interaction promotes cell surface expression of SLC1A1. As to quaternary structure, interacts with TMEM33. As to expression, highly expressed in skeletal muscle.

Its subcellular location is the endoplasmic reticulum membrane. It is found in the sarcoplasmic reticulum membrane. The protein resides in the cell membrane. It localises to the sarcolemma. The protein localises to the T-tubule. Its subcellular location is the cytoplasm. It is found in the myofibril. The protein resides in the sarcomere. It localises to the z line. The protein localises to the cytoskeleton. Its function is as follows. Inhibits amyloid precursor protein processing, probably by blocking BACE1 activity. Enhances trafficking of the glutamate transporter SLC1A1/EAAC1 from the endoplasmic reticulum to the cell surface. Plays a role in the translocation of SLC2A4/GLUT4 from intracellular membranes to the cell membrane which facilitates the uptake of glucose into the cell. The sequence is that of Reticulon-2 (RTN2) from Homo sapiens (Human).